A 337-amino-acid polypeptide reads, in one-letter code: Adenylosuccinate synthetase (337 aa).

GTP-binding positions include 12-18 (GDEGKGK) and 42-44 (GHT). Aspartate 13 serves as the catalytic Proton acceptor. Residues aspartate 13 and glycine 42 each contribute to the Mg(2+) site. Residues 13–16 (DEGK), 40–43 (NAGH), threonine 127, arginine 141, glutamine 179, threonine 194, and arginine 256 contribute to the IMP site. The Proton donor role is filled by histidine 43. 252–258 (TVTGRRR) is a binding site for substrate. GTP contacts are provided by residues arginine 258, 284 to 286 (CLD), and 324 to 326 (STG).

It belongs to the adenylosuccinate synthetase family. As to quaternary structure, homodimer. The cofactor is Mg(2+).

The protein resides in the cytoplasm. It catalyses the reaction IMP + L-aspartate + GTP = N(6)-(1,2-dicarboxyethyl)-AMP + GDP + phosphate + 2 H(+). The protein operates within purine metabolism; AMP biosynthesis via de novo pathway; AMP from IMP: step 1/2. Its function is as follows. Plays an important role in the de novo pathway of purine nucleotide biosynthesis. Catalyzes the first committed step in the biosynthesis of AMP from IMP. This Methanococcus maripaludis (strain C5 / ATCC BAA-1333) protein is Adenylosuccinate synthetase.